The chain runs to 598 residues: DNA ligase (598 aa).

D258 is an ATP binding site. Catalysis depends on K260, which acts as the N6-AMP-lysine intermediate. ATP contacts are provided by R265, R280, E310, F350, R427, and K433.

Belongs to the ATP-dependent DNA ligase family. Mg(2+) is required as a cofactor.

It catalyses the reaction ATP + (deoxyribonucleotide)n-3'-hydroxyl + 5'-phospho-(deoxyribonucleotide)m = (deoxyribonucleotide)n+m + AMP + diphosphate.. Functionally, DNA ligase that seals nicks in double-stranded DNA during DNA replication, DNA recombination and DNA repair. This is DNA ligase from Sulfolobus acidocaldarius (strain ATCC 33909 / DSM 639 / JCM 8929 / NBRC 15157 / NCIMB 11770).